Reading from the N-terminus, the 98-residue chain is NADH-ubiquinone oxidoreductase chain 4L (98 aa).

The next 3 membrane-spanning stretches (helical) occupy residues 1-21 (MSLT…GLLM), 29-49 (SLLC…MTIL), and 61-81 (IILL…LVMV).

The protein belongs to the complex I subunit 4L family. Core subunit of respiratory chain NADH dehydrogenase (Complex I) which is composed of 45 different subunits.

It is found in the mitochondrion inner membrane. The enzyme catalyses a ubiquinone + NADH + 5 H(+)(in) = a ubiquinol + NAD(+) + 4 H(+)(out). Functionally, core subunit of the mitochondrial membrane respiratory chain NADH dehydrogenase (Complex I) which catalyzes electron transfer from NADH through the respiratory chain, using ubiquinone as an electron acceptor. Part of the enzyme membrane arm which is embedded in the lipid bilayer and involved in proton translocation. This is NADH-ubiquinone oxidoreductase chain 4L (MT-ND4L) from Vampyressa brocki (Brock's yellow-eared bat).